The chain runs to 108 residues: Trp operon repressor homolog (108 aa).

Residues 59 to 82 (QRQISQLLGVGVATITRGSNELKS) mediate DNA binding.

It belongs to the TrpR family. In terms of assembly, homodimer.

It is found in the cytoplasm. Its function is as follows. This protein is an aporepressor. When complexed with L-tryptophan it binds the operator region of the trp operon and prevents the initiation of transcription. The polypeptide is Trp operon repressor homolog (Aliivibrio fischeri (strain ATCC 700601 / ES114) (Vibrio fischeri)).